We begin with the raw amino-acid sequence, 283 residues long: Pantothenate synthetase (283 aa).

An ATP-binding site is contributed by 34 to 41 (MGALHEGH). Residue H41 is the Proton donor of the active site. Q65 lines the (R)-pantoate pocket. Residue Q65 coordinates beta-alanine. Residue 152–155 (GEKD) coordinates ATP. Residue Q158 coordinates (R)-pantoate. Residue 189–192 (MSSR) coordinates ATP.

Belongs to the pantothenate synthetase family. In terms of assembly, homodimer.

The protein localises to the cytoplasm. It carries out the reaction (R)-pantoate + beta-alanine + ATP = (R)-pantothenate + AMP + diphosphate + H(+). The protein operates within cofactor biosynthesis; (R)-pantothenate biosynthesis; (R)-pantothenate from (R)-pantoate and beta-alanine: step 1/1. Catalyzes the condensation of pantoate with beta-alanine in an ATP-dependent reaction via a pantoyl-adenylate intermediate. The chain is Pantothenate synthetase from Rhodopseudomonas palustris (strain BisA53).